The chain runs to 219 residues: MILPSLLVASLSALAAAGPVPPSALEARQSESASDLENGICKPVVLIFARGSTESGNMGYIAGMPTCNALKTKLGSDQVACQGVGGAYTAGLIPNFLPNNTDQASIDEATKMFDLAHTQCPDAQIVAGGYSQGTAVMDGSIQALPDDIKSTVKGVVLFGFTRNLQDNGQIPNYPKDQTKVICAPGDLVCDGTLIITPAHLTYALYAGEAAEFLASKVSA.

Residues Met1 to Ala17 form the signal peptide. 2 disulfides stabilise this stretch: Cys41–Cys120 and Cys67–Cys81. A glycan (N-linked (GlcNAc...) asparagine) is linked at Asn99. Residue Ser131 is the Nucleophile of the active site. A disulfide bridge connects residues Cys182 and Cys189. The active site involves Asp186. The Proton donor/acceptor role is filled by His199.

The protein belongs to the cutinase family.

It localises to the secreted. It carries out the reaction cutin + H2O = cutin monomers.. Catalyzes the hydrolysis of complex carboxylic polyesters found in the cell wall of plants. Degrades cutin, a macromolecule that forms the structure of the plant cuticle. The chain is Probable cutinase 4 from Aspergillus terreus (strain NIH 2624 / FGSC A1156).